The chain runs to 179 residues: Large ribosomal subunit protein uL5 (179 aa).

The protein belongs to the universal ribosomal protein uL5 family. As to quaternary structure, part of the 50S ribosomal subunit; part of the 5S rRNA/L5/L18/L25 subcomplex. Contacts the 5S rRNA and the P site tRNA. Forms a bridge to the 30S subunit in the 70S ribosome.

In terms of biological role, this is one of the proteins that bind and probably mediate the attachment of the 5S RNA into the large ribosomal subunit, where it forms part of the central protuberance. In the 70S ribosome it contacts protein S13 of the 30S subunit (bridge B1b), connecting the 2 subunits; this bridge is implicated in subunit movement. Contacts the P site tRNA; the 5S rRNA and some of its associated proteins might help stabilize positioning of ribosome-bound tRNAs. This is Large ribosomal subunit protein uL5 from Buchnera aphidicola subsp. Acyrthosiphon pisum (strain APS) (Acyrthosiphon pisum symbiotic bacterium).